Reading from the N-terminus, the 273-residue chain is Release factor glutamine methyltransferase (273 aa).

Residues 109 to 113, Asp132, Trp159, and Asn176 each bind S-adenosyl-L-methionine; that span reads GTGSG. 176 to 179 contacts substrate; it reads NPPY.

It belongs to the protein N5-glutamine methyltransferase family. PrmC subfamily.

The enzyme catalyses L-glutaminyl-[peptide chain release factor] + S-adenosyl-L-methionine = N(5)-methyl-L-glutaminyl-[peptide chain release factor] + S-adenosyl-L-homocysteine + H(+). Functionally, methylates the class 1 translation termination release factors RF1/PrfA and RF2/PrfB on the glutamine residue of the universally conserved GGQ motif. The polypeptide is Release factor glutamine methyltransferase (Neisseria gonorrhoeae (strain ATCC 700825 / FA 1090)).